The chain runs to 449 residues: Sulfite exporter TauE/SafE family protein 5 (449 aa).

Transmembrane regions (helical) follow at residues 1–21 (MKTL…NANQ), 57–77 (AIIM…AGGI), 78–98 (GGGG…LKTA), 101–121 (FSAF…LFGG), 127–147 (YDLA…GVIC), 150–170 (VLPE…SSLK), 224–244 (IPWT…VIYL), 259–279 (PCGV…LIFT), 315–335 (AMSF…GMLI), 353–373 (TSFM…LLGM), 378–398 (TAYV…VLVQ), and 409–429 (IIVF…TSFG).

This sequence belongs to the 4-toluene sulfonate uptake permease (TSUP) (TC 2.A.102) family.

The protein resides in the membrane. This chain is Sulfite exporter TauE/SafE family protein 5, found in Arabidopsis thaliana (Mouse-ear cress).